The primary structure comprises 192 residues: FAD-linked sulfhydryl oxidase erv2 (192 aa).

Over 1-8 (MILNRRIQ) the chain is Cytoplasmic. A helical; Signal-anchor membrane pass occupies residues 9-29 (VILPTLLILSFIIWIFHSVMV). The Lumenal segment spans residues 30-192 (DKDWRLFMPE…VINEDHDYSG (163 aa)). The region spanning 61-162 (HDNNTNNLMV…TSCDGFNERY (102 aa)) is the ERV/ALR sulfhydryl oxidase domain. Positions 74, 138, 141, 145, and 162 each coordinate FAD. The cysteines at positions 138 and 155 are disulfide-linked.

Requires FAD as cofactor.

It localises to the endoplasmic reticulum membrane. The protein localises to the cytoplasm. Its subcellular location is the nucleus. The enzyme catalyses 2 R'C(R)SH + O2 = R'C(R)S-S(R)CR' + H2O2. FAD-dependent sulfhydryl oxidase that catalyzes disulfide bond formation in the endoplasmic reticulum lumen. The sequence is that of FAD-linked sulfhydryl oxidase erv2 (erv2) from Schizosaccharomyces pombe (strain 972 / ATCC 24843) (Fission yeast).